A 265-amino-acid polypeptide reads, in one-letter code: MSVSQKHPFHLVDPSPWPLLGSLGALASTIGGVMYMHSFTGGGTLLCLGLGMILYTMFVWWRDVIRESTYEGHHTFVVQLGLRYGIILFIVSEVMFFLAFFWAFFHSSLAPTVEIGAIWPPKGISVLDPWGIPFLNTLILLSSGAAVTWAHHAILAGLKQQAVYALIATVFLALVFTGFQGIEYIEAPFTISDGIYGSTFFLATGFHGFHVIIGTIFLIICGIRQYLGHFTPKHHFGFEAAAFYWHFVDVVWLFLFVSIYWWGGN.

7 helical membrane-spanning segments follow: residues 16–36 (PWPL…VMYM), 41–61 (GGGT…FVWW), 85–105 (GIIL…WAFF), 138–158 (LILL…LAGL), 162–182 (AVYA…FQGI), 200–220 (FFLA…FLII), and 242–262 (AFYW…IYWW).

It belongs to the cytochrome c oxidase subunit 3 family. As to quaternary structure, component of the cytochrome c oxidase (complex IV, CIV), a multisubunit enzyme composed of a catalytic core of 3 subunits and several supernumerary subunits. The complex exists as a monomer or a dimer and forms supercomplexes (SCs) in the inner mitochondrial membrane with ubiquinol-cytochrome c oxidoreductase (cytochrome b-c1 complex, complex III, CIII).

The protein resides in the mitochondrion inner membrane. It carries out the reaction 4 Fe(II)-[cytochrome c] + O2 + 8 H(+)(in) = 4 Fe(III)-[cytochrome c] + 2 H2O + 4 H(+)(out). Functionally, component of the cytochrome c oxidase, the last enzyme in the mitochondrial electron transport chain which drives oxidative phosphorylation. The respiratory chain contains 3 multisubunit complexes succinate dehydrogenase (complex II, CII), ubiquinol-cytochrome c oxidoreductase (cytochrome b-c1 complex, complex III, CIII) and cytochrome c oxidase (complex IV, CIV), that cooperate to transfer electrons derived from NADH and succinate to molecular oxygen, creating an electrochemical gradient over the inner membrane that drives transmembrane transport and the ATP synthase. Cytochrome c oxidase is the component of the respiratory chain that catalyzes the reduction of oxygen to water. Electrons originating from reduced cytochrome c in the intermembrane space (IMS) are transferred via the dinuclear copper A center (CU(A)) of subunit 2 and heme A of subunit 1 to the active site in subunit 1, a binuclear center (BNC) formed by heme A3 and copper B (CU(B)). The BNC reduces molecular oxygen to 2 water molecules using 4 electrons from cytochrome c in the IMS and 4 protons from the mitochondrial matrix. This is Cytochrome c oxidase subunit 3 (COX3) from Marchantia polymorpha (Common liverwort).